We begin with the raw amino-acid sequence, 159 residues long: Style cell-cycle inhibitor 1 (159 aa).

The segment at 1 to 86 (MVSERSSKEK…SDHKLKEGIP (86 aa)) is disordered. The span at 15 to 50 (ARSEDSSSSDYEEKVKRHRGTEKDDERRSRRSDKKD) shows a compositional bias: basic and acidic residues. The segment covering 51–63 (KKSHKHHKSSTSK) has biased composition (basic residues). The segment covering 64–85 (KSKDDKPKKKHTESDHKLKEGI) has biased composition (basic and acidic residues).

The protein localises to the nucleus. Its function is as follows. Component of the auxin signaling transduction pathway that regulates cell proliferation and differentiation during flowers stigmas and styles development. Involved in the regulation of auxin-related genes. The polypeptide is Style cell-cycle inhibitor 1 (Arabidopsis thaliana (Mouse-ear cress)).